Reading from the N-terminus, the 111-residue chain is MRYVAAYLLAALSGNADPSTADIEKILSSVGIECNPSQLQKVMNELKGKDLEALIAEGQTKLASMPTGGAPAAAAGGAATAPAAEAKEAKKEEKKEESEEEDEDMGFGLFD.

Residues 63 to 84 (ASMPTGGAPAAAAGGAATAPAA) show a composition bias toward low complexity. Positions 63–111 (ASMPTGGAPAAAAGGAATAPAAEAKEAKKEEKKEESEEEDEDMGFGLFD) are disordered. Positions 85-97 (EAKEAKKEEKKEE) are enriched in basic and acidic residues. A Phosphoserine modification is found at Ser-98.

Part of the ribosomal stalk of the large ribosomal subunit; P1 and P2 exist as dimers which assemble on the P0 scaffold.

Its function is as follows. Plays an important role in the elongation step of protein synthesis. The polypeptide is Large ribosomal subunit protein P2 (Artemia salina (Brine shrimp)).